We begin with the raw amino-acid sequence, 624 residues long: Serine/threonine-protein kinase ppk35 (624 aa).

The Protein kinase domain maps to 162 to 465; it reads FDLLVKLGQG…TIEIQKHPFF (304 aa). ATP contacts are provided by residues 168–176 and Lys191; that span reads LGQGGYGSV. The active-site Proton acceptor is the Asp285. The AGC-kinase C-terminal domain occupies 466–548; that stretch reads KRLHWNGLRK…KYRPNARKPL (83 aa). Over residues 545-559 the composition is skewed to basic residues; that stretch reads RKPLVGRHREKRQLR. Residues 545–617 form a disordered region; the sequence is RKPLVGRHRE…VHRLLERKGK (73 aa). Residues 560–574 are compositionally biased toward basic and acidic residues; sequence KEKPEKKNNSTKQKD. Residues 596–609 are compositionally biased toward basic residues; that stretch reads SKTKGHKTKSSRVH.

The protein belongs to the protein kinase superfamily. Ser/Thr protein kinase family.

The protein resides in the cytoplasm. It localises to the nucleus. Its subcellular location is the nucleolus. It carries out the reaction L-seryl-[protein] + ATP = O-phospho-L-seryl-[protein] + ADP + H(+). The catalysed reaction is L-threonyl-[protein] + ATP = O-phospho-L-threonyl-[protein] + ADP + H(+). Its function is as follows. Has a role in meiosis. This Schizosaccharomyces pombe (strain 972 / ATCC 24843) (Fission yeast) protein is Serine/threonine-protein kinase ppk35 (ppk35).